The sequence spans 507 residues: Histidine ammonia-lyase (507 aa).

Residues 141 to 143 (ASG) constitute a cross-link (5-imidazolinone (Ala-Gly)). Serine 142 carries the 2,3-didehydroalanine (Ser) modification.

Belongs to the PAL/histidase family. In terms of processing, contains an active site 4-methylidene-imidazol-5-one (MIO), which is formed autocatalytically by cyclization and dehydration of residues Ala-Ser-Gly.

The protein localises to the cytoplasm. It catalyses the reaction L-histidine = trans-urocanate + NH4(+). The protein operates within amino-acid degradation; L-histidine degradation into L-glutamate; N-formimidoyl-L-glutamate from L-histidine: step 1/3. This chain is Histidine ammonia-lyase, found in Burkholderia lata (strain ATCC 17760 / DSM 23089 / LMG 22485 / NCIMB 9086 / R18194 / 383).